We begin with the raw amino-acid sequence, 286 residues long: Homoserine kinase (286 aa).

78–88 (PLARGLGSSSS) contributes to the ATP binding site.

It belongs to the GHMP kinase family. Homoserine kinase subfamily.

It localises to the cytoplasm. It carries out the reaction L-homoserine + ATP = O-phospho-L-homoserine + ADP + H(+). Its pathway is amino-acid biosynthesis; L-threonine biosynthesis; L-threonine from L-aspartate: step 4/5. Catalyzes the ATP-dependent phosphorylation of L-homoserine to L-homoserine phosphate. The chain is Homoserine kinase from Streptococcus equi subsp. zooepidemicus (strain H70).